Reading from the N-terminus, the 463-residue chain is Methionine aminopeptidase 2-1 (463 aa).

Positions 1–12 (MGSKTPDGHRQG) are enriched in basic and acidic residues. The segment at 1-96 (MGSKTPDGHR…SGQQTTPPRV (96 aa)) is disordered. Residues 41–53 (SGEDDEDGDDDEE) show a composition bias toward acidic residues. A compositionally biased stretch (polar residues) spans 58 to 67 (DLNSRAQPNN). Residues 70 to 85 (KKRKRKNNKKKKKKRP) are compositionally biased toward basic residues. His-215 contributes to the substrate binding site. Residues Asp-236, Asp-247, and His-316 each coordinate a divalent metal cation. His-324 contributes to the substrate binding site. The a divalent metal cation site is built by Glu-349 and Glu-444.

The protein belongs to the peptidase M24A family. Methionine aminopeptidase eukaryotic type 2 subfamily. Co(2+) is required as a cofactor. Zn(2+) serves as cofactor. The cofactor is Mn(2+). It depends on Fe(2+) as a cofactor.

Its subcellular location is the cytoplasm. The catalysed reaction is Release of N-terminal amino acids, preferentially methionine, from peptides and arylamides.. Its function is as follows. Cotranslationally removes the N-terminal methionine from nascent proteins. The N-terminal methionine is often cleaved when the second residue in the primary sequence is small and uncharged (Met-Ala-, Cys, Gly, Pro, Ser, Thr, or Val). The sequence is that of Methionine aminopeptidase 2-1 from Arthroderma otae (strain ATCC MYA-4605 / CBS 113480) (Microsporum canis).